The sequence spans 77 residues: U8-lycotoxin-Ls1f (77 aa).

The signal sequence occupies residues 1–20 (MKLIIFTGLVLFAIVSLIEV). A propeptide spanning residues 21 to 26 (QADNER) is cleaved from the precursor.

Belongs to the neurotoxin 19 (CSTX) family. 08 (U8-Lctx) subfamily. Post-translationally, contains 4 disulfide bonds. As to expression, expressed by the venom gland.

It localises to the secreted. This Lycosa singoriensis (Wolf spider) protein is U8-lycotoxin-Ls1f.